Here is a 2278-residue protein sequence, read N- to C-terminus: 1-phosphatidylinositol 3-phosphate 5-kinase FAB1 (2278 aa).

Disordered stretches follow at residues 1 to 30 (MSSE…SVNT) and 76 to 144 (PPTS…LQLP). An N-acetylserine modification is found at serine 2. The segment at 2-676 (SSEEPHASIS…NSTKSFQRAQ (675 aa)) is required for localization to the vacuole membrane. Low complexity-rich tracts occupy residues 18-28 (VRSSSTGTSSV) and 76-89 (PPTS…TSTS). Positions 90–128 (HVTGTASHSNIKANANTSTSVNKKNLPPTTSGRIPSSTI) are enriched in polar residues. At serine 186 the chain carries Phosphoserine. The FYVE-type zinc finger occupies 240–299 (DESSKECFSCGKTFNTFRRKHHCRICGQIFCSSCTLLIDGDRFGCHAKMRVCYNCYEHAD). Residues cysteine 246, cysteine 249, cysteine 262, cysteine 265, cysteine 270, cysteine 273, cysteine 291, and cysteine 294 each coordinate Zn(2+). 5 disordered regions span residues 302–337 (EDSS…HSHS), 472–500 (ITIN…NNPA), 514–534 (NSVN…AQSS), 556–697 (FNYN…PNNS), and 727–766 (DSSP…NINT). A compositionally biased stretch (low complexity) spans 472 to 498 (ITINNLNNTTSNNSNYNNTNSNSNINN). The segment covering 557–570 (NYNSKGPSQQNDTA) has biased composition (polar residues). Low complexity predominate over residues 571 to 601 (NGNNDNNNNNNNNNNNNNNNSASGIADNNNI). Residues 602–611 (PSNDNGTTFT) are compositionally biased toward polar residues. The span at 634-644 (LNEEDSSEDEG) shows a compositional bias: acidic residues. The segment covering 665-679 (MRNSTKSFQRAQASL) has biased composition (polar residues). Residues 682–692 (MRFRRKSKSKH) are compositionally biased toward basic residues. The segment covering 729 to 741 (SPLQDKASSSAAS) has biased composition (polar residues). Positions 749-763 (SNSSGSNNNSNSNSN) are enriched in low complexity. Residues 766 to 1039 (TDPWKRIASI…KIKQVSEFMV (274 aa)) form a CCT domain region. Positions 1181-1500 (SSSQNLLGTG…TAKQLKKLFY (320 aa)) are CCR domain. Residues 1506 to 1554 (DSEDKKSLHDEKAKTRKPEKNELPLEGLKDVEKPKIDSKNTTENRDRTN) are compositionally biased toward basic and acidic residues. Positions 1506 to 1627 (DSEDKKSLHD…TRPNIRKMSS (122 aa)) are disordered. Residues 1555 to 1564 (EPQNAVTITT) show a composition bias toward polar residues. Low complexity predominate over residues 1580–1595 (LTVTPSASSVSSSLTP). Phosphoserine is present on residues serine 1627 and serine 1630. Residues 1766–1776 (SGKTTASTHLN) are compositionally biased toward polar residues. 2 disordered regions span residues 1766-1804 (SGKT…EPLP) and 1891-1972 (QQQQ…THSQ). Over residues 1780-1799 (VVKETSENPKSIVRESDNSK) the composition is skewed to basic and acidic residues. Positions 1918-1932 (DPSVNISPSVSTTSH) are enriched in polar residues. The region spanning 1932-2266 (HNKGRDSEIS…RFREAMERYI (335 aa)) is the PIPK domain. Serine 1938 carries the phosphoserine modification. At threonine 1953 the chain carries Phosphothreonine.

Component of the PI(3,5)P2 regulatory complex, composed of ATG18, FIG4, FAB1, VAC14 and VAC7. VAC14 nucleates the assembly of the complex and serves as a scaffold. Mg(2+) serves as cofactor. The cofactor is Mn(2+).

Its subcellular location is the vacuole membrane. It localises to the endosome membrane. It carries out the reaction a 1,2-diacyl-sn-glycero-3-phospho-(1D-myo-inositol-3-phosphate) + ATP = a 1,2-diacyl-sn-glycero-3-phospho-(1D-myo-inositol-3,5-bisphosphate) + ADP + H(+). It catalyses the reaction 1,2-dihexadecanoyl-sn-glycero-3-phospho-(1D-myo-inositol-3-phosphate) + ATP = 1,2-dihexadecanoyl-sn-glycero-3-phospho-(1D-myo-inositol-3,5-phosphate) + ADP + H(+). Its activity is regulated as follows. Activated by VAC14 and VAC7. VAC14 acts as a specific osmotic response regulator. In terms of biological role, the PI(3,5)P2 regulatory complex regulates both the synthesis and turnover of phosphatidylinositol 3,5-bisphosphate (PtdIns(3,5)P2). Catalyzes the phosphorylation of phosphatidylinositol 3-phosphate on the fifth hydroxyl of the myo-inositol ring, to form phosphatidylinositol 3,5-bisphosphate. Required for endocytic-vacuolar pathway and nuclear migration. The product of the reaction, PI(3,5)P2 is an important regulator of vacuole homeostasis perhaps by controlling membrane flux to and/or from the vacuole. PI(3,5)P2 regulates the transition between trans-SNARE complex formation and vacuole membrane fusion. Hyperosmotic shock-induced increase in the levels of PtdIns(3,5)P2 requires the presence of VAC7, VAC14, and/or FIG4. The polypeptide is 1-phosphatidylinositol 3-phosphate 5-kinase FAB1 (Saccharomyces cerevisiae (strain ATCC 204508 / S288c) (Baker's yeast)).